Consider the following 448-residue polypeptide: Fibulin-5 (448 aa).

A signal peptide spans 1–23 (MPGFKRILTVTVLALCLPTPGNA). Residues 42-82 (DVDECRTIPEACRGDMMCVNQNGGYLCIPRTNPVYRGPYSN) enclose the EGF-like 1; calcium-binding domain. Intrachain disulfides connect cysteine 46/cysteine 59, cysteine 53/cysteine 68, cysteine 131/cysteine 144, cysteine 138/cysteine 153, cysteine 155/cysteine 166, cysteine 172/cysteine 181, cysteine 177/cysteine 190, cysteine 192/cysteine 205, cysteine 211/cysteine 221, cysteine 217/cysteine 230, cysteine 232/cysteine 245, cysteine 251/cysteine 262, cysteine 258/cysteine 271, cysteine 273/cysteine 286, cysteine 292/cysteine 305, cysteine 299/cysteine 314, and cysteine 320/cysteine 332. The Cell attachment site motif lies at 54–56 (RGD). Positions 127–167 (DVDECATDSHQCNPTQICINTEGGYTCSCTDGYWLLEGQCL) constitute an EGF-like 2; calcium-binding domain. The 39-residue stretch at 168-206 (DIDECRYGYCQQLCANVPGSYSCTCNPGFTLNEDGRSCQ) folds into the EGF-like 3; calcium-binding domain. In terms of domain architecture, EGF-like 4; calcium-binding spans 207–246 (DVNECATENPCVQTCVNTYGSFICRCDPGYELEDDGVHCS). The segment at 245–448 (CSDMDECSFS…LRIYVSQYPF (204 aa)) is interaction with LOXL1. Residues 247-287 (DMDECSFSEFLCQHECVNQPGTYFCSCPAGYILLDDNRSCQ) form the EGF-like 5; calcium-binding domain. Residues asparagine 283 and asparagine 296 are each glycosylated (N-linked (GlcNAc...) asparagine). Positions 288–333 (DINECEHRNHTCILQQTCYNLQGGFKCIDPIRCEEPYLRISDNRCM) constitute an EGF-like 6; calcium-binding domain.

The protein belongs to the fibulin family. In terms of assembly, homodimer. Monomer, homodimerizes in presence of Ca(2+). Interacts with ELN. Interacts (via N-terminus) with the integrins ITGAV/ITGB3, ITGAV/ITGB5 and ITGA9/ITGB1. Interacts with FBN1 (via N-terminal domain). Forms a ternary complex with ELN and FBN1. Interacts with EFEMP2 with moderate affinity. Interacts with LOXL1. N-glycosylated.

It is found in the secreted. It localises to the extracellular space. Its subcellular location is the extracellular matrix. Functionally, essential for elastic fiber formation, is involved in the assembly of continuous elastin (ELN) polymer and promotes the interaction of microfibrils and ELN. Stabilizes and organizes elastic fibers in the skin, lung and vasculature. Promotes adhesion of endothelial cells through interaction of integrins and the RGD motif. Vascular ligand for integrin receptors which may play a role in vascular development and remodeling. May act as an adapter that mediates the interaction between FBN1 and ELN. This Bos taurus (Bovine) protein is Fibulin-5 (FBLN5).